The chain runs to 150 residues: Arginine repressor (150 aa).

This sequence belongs to the ArgR family.

It localises to the cytoplasm. It functions in the pathway amino-acid biosynthesis; L-arginine biosynthesis [regulation]. Regulates arginine biosynthesis genes. This chain is Arginine repressor, found in Clostridium beijerinckii (strain ATCC 51743 / NCIMB 8052) (Clostridium acetobutylicum).